The sequence spans 1148 residues: Alpha-mannosidase 2 (1148 aa).

At 1–5 (MKLSR) the chain is on the cytoplasmic side. Residues 6–26 (QFTVFGSAIFCVVIFSLYLML) traverse the membrane as a helical; Signal-anchor for type II membrane protein segment. Over 27–1148 (DRGHLDYPRG…EISTSRIRLR (1122 aa)) the chain is Lumenal. Phosphoserine is present on residues S80 and S82. N93 carries N-linked (GlcNAc...) asparagine glycosylation. Zn(2+) contacts are provided by H174, D176, D288, and H568. The active-site Nucleophile is D288. The disordered stretch occupies residues 1121-1148 (MHSPPDAQNTSEVSLSPMEISTSRIRLR).

This sequence belongs to the glycosyl hydrolase 38 family. As to quaternary structure, homodimer; disulfide-linked. Zn(2+) serves as cofactor. Post-translationally, glycosylated. Liver.

The protein resides in the golgi apparatus membrane. It catalyses the reaction N(4)-{beta-D-GlcNAc-(1-&gt;2)-alpha-D-Man-(1-&gt;3)-[alpha-D-Man-(1-&gt;3)-[alpha-D-Man-(1-&gt;6)]-alpha-D-Man-(1-&gt;6)]-beta-D-Man-(1-&gt;4)-beta-D-GlcNAc-(1-&gt;4)-beta-D-GlcNAc}-L-asparaginyl-[protein] + 2 H2O = 2 alpha-D-mannopyranose + an N(4)-{beta-D-GlcNAc-(1-&gt;2)-alpha-D-Man-(1-&gt;3)-[alpha-D-Man-(1-&gt;6)]-beta-D-Man-(1-&gt;4)-beta-D-GlcNAc-(1-&gt;4)-beta-D-GlcNAc}-L-asparaginyl-[protein]. The protein operates within protein modification; protein glycosylation. Its activity is regulated as follows. Inhibited by swainsonine. In terms of biological role, catalyzes the first committed step in the biosynthesis of complex N-glycans. It controls conversion of high mannose to complex N-glycans; the final hydrolytic step in the N-glycan maturation pathway. The sequence is that of Alpha-mannosidase 2 (Man2a1) from Rattus norvegicus (Rat).